The sequence spans 343 residues: uncharacterized protein (343 aa).

The protein belongs to the IIV-6 219L family.

This is an uncharacterized protein from Invertebrate iridescent virus 6 (IIV-6).